We begin with the raw amino-acid sequence, 286 residues long: Sulfur carrier protein FdhD (286 aa).

C110 serves as the catalytic Cysteine persulfide intermediate. 247–252 (FARGEK) contacts Mo-bis(molybdopterin guanine dinucleotide).

The protein belongs to the FdhD family.

The protein resides in the cytoplasm. Functionally, required for formate dehydrogenase (FDH) activity. Acts as a sulfur carrier protein that transfers sulfur from IscS to the molybdenum cofactor prior to its insertion into FDH. The chain is Sulfur carrier protein FdhD from Wolinella succinogenes (strain ATCC 29543 / DSM 1740 / CCUG 13145 / JCM 31913 / LMG 7466 / NCTC 11488 / FDC 602W) (Vibrio succinogenes).